The sequence spans 498 residues: U4/U6 small nuclear ribonucleoprotein Prp31 (498 aa).

2 coiled-coil regions span residues 84–119 (EAAPEYKVIVDANNLTVEIENELNIIHKFIRDKYSK) and 180–214 (DEELERIEEACDMALELNQSKHRIYEYVESRMSFI). Residues 214–332 (IAPNLSIIVG…IERKFDKWQE (119 aa)) form the Nop domain. Residues 333–356 (PPPVKQVKPLPAPLDGQRKKRGGR) form a disordered region. The Nuclear localization signal (NLS) signature appears at 350–363 (RKKRGGRRYRKMKE).

It belongs to the PRP31 family. In terms of assembly, identified in the spliceosome B complex. Component of the U4/U6-U5 tri-snRNP complex. Component of some MLL1/MLL complex.

Its subcellular location is the nucleus. It is found in the nucleus speckle. The protein localises to the cajal body. Involved in pre-mRNA splicing as component of the spliceosome. Required for the assembly of the U4/U5/U6 tri-snRNP complex, one of the building blocks of the spliceosome. In Xenopus tropicalis (Western clawed frog), this protein is U4/U6 small nuclear ribonucleoprotein Prp31 (prpf31).